A 397-amino-acid polypeptide reads, in one-letter code: Argininosuccinate synthase (397 aa).

ATP is bound at residue 9 to 17 (AYSGGLDTT). L-citrulline is bound at residue Y87. G117 provides a ligand contact to ATP. 3 residues coordinate L-aspartate: T119, N123, and D124. Position 123 (N123) interacts with L-citrulline. The L-citrulline site is built by R127, S174, S183, E259, and Y271.

Belongs to the argininosuccinate synthase family. Type 1 subfamily. In terms of assembly, homotetramer.

The protein localises to the cytoplasm. It catalyses the reaction L-citrulline + L-aspartate + ATP = 2-(N(omega)-L-arginino)succinate + AMP + diphosphate + H(+). The protein operates within amino-acid biosynthesis; L-arginine biosynthesis; L-arginine from L-ornithine and carbamoyl phosphate: step 2/3. The protein is Argininosuccinate synthase of Pyrobaculum aerophilum (strain ATCC 51768 / DSM 7523 / JCM 9630 / CIP 104966 / NBRC 100827 / IM2).